The sequence spans 357 residues: Alanine racemase (357 aa).

Residue Lys35 is the Proton acceptor; specific for D-alanine of the active site. Lys35 bears the N6-(pyridoxal phosphate)lysine mark. Substrate is bound at residue Arg130. Tyr253 functions as the Proton acceptor; specific for L-alanine in the catalytic mechanism. Substrate is bound at residue Met302.

The protein belongs to the alanine racemase family. Pyridoxal 5'-phosphate serves as cofactor.

The catalysed reaction is L-alanine = D-alanine. It functions in the pathway amino-acid biosynthesis; D-alanine biosynthesis; D-alanine from L-alanine: step 1/1. Catalyzes the interconversion of L-alanine and D-alanine. May also act on other amino acids. This Wigglesworthia glossinidia brevipalpis protein is Alanine racemase (alr).